Consider the following 899-residue polypeptide: Ewing's tumor-associated antigen 1 homolog (899 aa).

The disordered stretch occupies residues 1-82 (MSRRRKHGDS…TEERYETPKR (82 aa)). Positions 71-81 (SNTEERYETPK) are enriched in basic and acidic residues. An ATR-activation domain (AAD) motif is present at residues 105 to 111 (IFWDQNS). Positions 180-210 (TKLKSQNQEEELMKLAKQFDKNMEELDVIQE) form a coiled coil. Glycyl lysine isopeptide (Lys-Gly) (interchain with G-Cter in SUMO2) cross-links involve residues Lys-416 and Lys-444. A Phosphoserine modification is found at Ser-467. Glycyl lysine isopeptide (Lys-Gly) (interchain with G-Cter in SUMO2) cross-links involve residues Lys-485 and Lys-539. The RBM1 motif signature appears at 607 to 622 (DDVDDDILYQACDDIE). A Phosphoserine modification is found at Ser-810. Positions 833-899 (NKTVNPLPGK…AQASSVKKGR (67 aa)) are disordered. Basic and acidic residues predominate over residues 859 to 877 (PSKEEEEKNRKCSPEEIQR). Residues 868–890 (RKCSPEEIQRKRQAALIRRMAKA) carry the RBM2 motif motif.

As to quaternary structure, interacts (via RBM1 motif) with RPA1. Interacts (via RBM2 motif) with RPA2. Interacts (via the ATR-activation domain motif) with ATR. Post-translationally, phosphorylated by ATR.

It is found in the nucleus. Functionally, replication stress response protein that accumulates at DNA damage sites and promotes replication fork progression and integrity. Recruited to stalled replication forks via interaction with the RPA complex and directly stimulates ATR kinase activity independently of TOPBP1. Probably only regulates a subset of ATR targets. This chain is Ewing's tumor-associated antigen 1 homolog, found in Bos taurus (Bovine).